The following is a 78-amino-acid chain: uncharacterized protein (78 aa).

This is an uncharacterized protein from Mycoplasma (Bacteriophage L2).